The sequence spans 529 residues: Bifunctional purine biosynthesis protein PurH (529 aa).

The 148-residue stretch at 1–148 folds into the MGS-like domain; the sequence is MQQRRPVRRA…KNHKDVAIVV (148 aa).

This sequence belongs to the PurH family.

It carries out the reaction (6R)-10-formyltetrahydrofolate + 5-amino-1-(5-phospho-beta-D-ribosyl)imidazole-4-carboxamide = 5-formamido-1-(5-phospho-D-ribosyl)imidazole-4-carboxamide + (6S)-5,6,7,8-tetrahydrofolate. The catalysed reaction is IMP + H2O = 5-formamido-1-(5-phospho-D-ribosyl)imidazole-4-carboxamide. Its pathway is purine metabolism; IMP biosynthesis via de novo pathway; 5-formamido-1-(5-phospho-D-ribosyl)imidazole-4-carboxamide from 5-amino-1-(5-phospho-D-ribosyl)imidazole-4-carboxamide (10-formyl THF route): step 1/1. It participates in purine metabolism; IMP biosynthesis via de novo pathway; IMP from 5-formamido-1-(5-phospho-D-ribosyl)imidazole-4-carboxamide: step 1/1. The chain is Bifunctional purine biosynthesis protein PurH from Salmonella schwarzengrund (strain CVM19633).